A 209-amino-acid chain; its full sequence is Uracil phosphoribosyltransferase (209 aa).

Residues arginine 79, arginine 104, and aspartate 131 to serine 139 contribute to the 5-phospho-alpha-D-ribose 1-diphosphate site. Residues isoleucine 194 and glycine 199 to alanine 201 contribute to the uracil site. Aspartate 200 provides a ligand contact to 5-phospho-alpha-D-ribose 1-diphosphate.

The protein belongs to the UPRTase family. Mg(2+) is required as a cofactor.

The catalysed reaction is UMP + diphosphate = 5-phospho-alpha-D-ribose 1-diphosphate + uracil. The protein operates within pyrimidine metabolism; UMP biosynthesis via salvage pathway; UMP from uracil: step 1/1. With respect to regulation, allosterically activated by GTP. Catalyzes the conversion of uracil and 5-phospho-alpha-D-ribose 1-diphosphate (PRPP) to UMP and diphosphate. In Staphylococcus aureus (strain JH1), this protein is Uracil phosphoribosyltransferase.